Consider the following 388-residue polypeptide: tRNA (guanine-N(7)-)-methyltransferase non-catalytic subunit (388 aa).

WD repeat units follow at residues 58-102 (VEKR…KGDI), 112-151 (VVPKAPTAIVFDKEDAYVVVGDRAGDVHRFSVLNGSAIEM), 153-194 (GAIS…DSFF), and 196-234 (GHTEYVKTLAVQDNDSLWSSGGDKNLYNWSIAKCSAPRR). A disordered region spans residues 365–388 (EKKKRRLNEDINGDDGEGPGPSNS).

It belongs to the WD repeat TRM82 family. Forms a heterodimer with the catalytic subunit.

The protein localises to the nucleus. Its pathway is tRNA modification; N(7)-methylguanine-tRNA biosynthesis. Its function is as follows. Required for the formation of N(7)-methylguanine at position 46 (m7G46) in tRNA. In the complex, it is required to stabilize and induce conformational changes of the catalytic subunit. In Caenorhabditis elegans, this protein is tRNA (guanine-N(7)-)-methyltransferase non-catalytic subunit.